Reading from the N-terminus, the 139-residue chain is Small ribosomal subunit protein uS19 (139 aa).

It belongs to the universal ribosomal protein uS19 family.

Its function is as follows. Protein S19 forms a complex with S13 that binds strongly to the 16S ribosomal RNA. The sequence is that of Small ribosomal subunit protein uS19 from Ignicoccus hospitalis (strain KIN4/I / DSM 18386 / JCM 14125).